Here is a 79-residue protein sequence, read N- to C-terminus: RNA-binding protein Hfq (79 aa).

Positions 10–70 constitute a Sm domain; sequence DAFLNHVRKT…ISTIMPAQPI (61 aa).

Belongs to the Hfq family. Homohexamer.

RNA chaperone that binds small regulatory RNA (sRNAs) and mRNAs to facilitate mRNA translational regulation in response to envelope stress, environmental stress and changes in metabolite concentrations. Also binds with high specificity to tRNAs. This chain is RNA-binding protein Hfq, found in Ruegeria sp. (strain TM1040) (Silicibacter sp.).